The following is an 86-amino-acid chain: Large ribosomal subunit protein bL27c (86 aa).

The interval 1-20 (MAHKKGSGSTRNGRDSNAQR) is disordered. The span at 7–19 (SGSTRNGRDSNAQ) shows a compositional bias: polar residues.

This sequence belongs to the bacterial ribosomal protein bL27 family.

It localises to the plastid. The protein localises to the chloroplast. The sequence is that of Large ribosomal subunit protein bL27c (rpl27) from Guillardia theta (Cryptophyte).